A 223-amino-acid polypeptide reads, in one-letter code: Transcriptional regulator HMO1 (223 aa).

2 disordered regions span residues 69–89 (IEAT…APKK) and 165–223 (DGSA…HGSP). Residues 70–86 (EATESKKKRKQEKDPNA) show a composition bias toward basic and acidic residues. The segment at residues 87–160 (PKKPLTMFFQ…IYNIEKKKYE (74 aa)) is a DNA-binding region (HMG box). Positions 204-223 (KKKKKTEKKEKKKKSGHGSP) are enriched in basic residues.

The protein resides in the nucleus. Transcription factor that binds upstream of hexose and ergosterol metabolism, as well as cell cycle genes. Activates pseudohyphal growth. The protein is Transcriptional regulator HMO1 (HMO1) of Candida albicans (strain SC5314 / ATCC MYA-2876) (Yeast).